A 233-amino-acid polypeptide reads, in one-letter code: Octanoyltransferase (233 aa).

Positions 34–212 constitute a BPL/LPL catalytic domain; it reads PDRPDVLLLL…AFAQTFELDL (179 aa). Residues 76-83, 143-145, and 156-158 each bind substrate; these read RGGEVTHH, AIG, and GFA. C174 serves as the catalytic Acyl-thioester intermediate.

Belongs to the LipB family.

It is found in the cytoplasm. The catalysed reaction is octanoyl-[ACP] + L-lysyl-[protein] = N(6)-octanoyl-L-lysyl-[protein] + holo-[ACP] + H(+). It functions in the pathway protein modification; protein lipoylation via endogenous pathway; protein N(6)-(lipoyl)lysine from octanoyl-[acyl-carrier-protein]: step 1/2. In terms of biological role, catalyzes the transfer of endogenously produced octanoic acid from octanoyl-acyl-carrier-protein onto the lipoyl domains of lipoate-dependent enzymes. Lipoyl-ACP can also act as a substrate although octanoyl-ACP is likely to be the physiological substrate. This is Octanoyltransferase from Synechococcus elongatus (strain ATCC 33912 / PCC 7942 / FACHB-805) (Anacystis nidulans R2).